The sequence spans 281 residues: MRSLVVFFALAVLTGCQARSLFQADAPQPRWEEMVDRFWQYVSELNTQTDGMVQNIKGSQLSRELDTLITDTMAELSSYSENLQTQMTPYASDAAGQLSKDLQLLAGKLQTDMTDAKERSTQYLQELKTMMEQNADDVKNRVGTYTRKLKKRLNKDTEEIRNTVATYMSEMQSRASQNADAVKDRFQPYMSQAQDGATQKLGAISELMKAQAQEVSEQLEVQAGALKEKLEETAENLRTSLEGRVDELTSLLAPYSQKIREQLQEVMDKIKEATAALPTQA.

The first 18 residues, 1 to 18, serve as a signal peptide directing secretion; the sequence is MRSLVVFFALAVLTGCQA. Residues 19-24 constitute a propeptide that is removed on maturation; it reads RSLFQA. The interval 34-66 is 3 X approximate tandem repeats; the sequence is MVDRFWQYVSELNTQTDGMVQNIKGSQLSRELD. 9 repeat units span residues 67–88, 89–110, 111–132, 133–154, 155–176, 177–199, 200–227, 228–249, and 254–281. A 9 X 22 AA approximate tandem repeats region spans residues 67-281; that stretch reads TLITDTMAEL…EATAALPTQA (215 aa).

Belongs to the apolipoprotein A1/A4/E family. As to quaternary structure, homotetramer.

The protein localises to the secreted. The protein resides in the extracellular space. It is found in the extracellular matrix. Its function is as follows. APOE is an apolipoprotein, a protein associating with lipid particles, that mainly functions in lipoprotein-mediated lipid transport between organs via the plasma and interstitial fluids. APOE is a core component of plasma lipoproteins and is involved in their production, conversion and clearance. Apolipoproteins are amphipathic molecules that interact both with lipids of the lipoprotein particle core and the aqueous environment of the plasma. This Danio rerio (Zebrafish) protein is Apolipoprotein Eb (apoeb).